Here is a 795-residue protein sequence, read N- to C-terminus: Putative replication origin-binding protein (795 aa).

In terms of domain architecture, Helicase ATP-binding spans 121–289 (WLSNDKIKTL…DNFGKSIVVN (169 aa)). 134 to 141 (SPMGTGKT) provides a ligand contact to ATP.

It belongs to the mimivirus R1 family.

In terms of biological role, probably involved in DNA replication. May bind the genome origin of replication (ori). This Acanthamoeba polyphaga (Amoeba) protein is Putative replication origin-binding protein.